The sequence spans 413 residues: Eukaryotic initiation factor 4A-8 (413 aa).

The Q motif motif lies at 40–68 (DSFDAMGLQENLLRGIYAYGFEKPSAIQQ). One can recognise a Helicase ATP-binding domain in the interval 71-241 (IVPFCKGLDV…RKFMNKPVRI (171 aa)). Position 84–91 (84–91 (AQSGTGKT)) interacts with ATP. A DEAD box motif is present at residues 189-192 (DEAD). The Helicase C-terminal domain maps to 252 to 413 (GIKQFYVNVD…ELPSNVADLL (162 aa)).

The protein belongs to the DEAD box helicase family. eIF4A subfamily. In terms of assembly, eIF4F is a multi-subunit complex, the composition of which varies with external and internal environmental conditions. It is composed of at least EIF4A, EIF4E and EIF4G. Pollen specific.

It carries out the reaction ATP + H2O = ADP + phosphate + H(+). Its function is as follows. ATP-dependent RNA helicase which is a subunit of the eIF4F complex involved in cap recognition and is required for mRNA binding to ribosome. In the current model of translation initiation, eIF4A unwinds RNA secondary structures in the 5'-UTR of mRNAs which is necessary to allow efficient binding of the small ribosomal subunit, and subsequent scanning for the initiator codon. The sequence is that of Eukaryotic initiation factor 4A-8 from Nicotiana tabacum (Common tobacco).